Reading from the N-terminus, the 476-residue chain is FAD-dependent monooxygenase dpasE (476 aa).

Residues 1-21 form the signal peptide; the sequence is MSQPAFKIIIVGCSVTGLTLA. Glu35, Ala49, and Arg109 together coordinate FAD. 2 N-linked (GlcNAc...) asparagine glycosylation sites follow: Asn190 and Asn219. FAD contacts are provided by Asp308 and Ala321. The chain crosses the membrane as a helical span at residues 441 to 461; that stretch reads GAGFWITAFLSLSLLAVAATM.

The protein belongs to the paxM FAD-dependent monooxygenase family. Requires FAD as cofactor.

The protein resides in the membrane. It participates in secondary metabolite biosynthesis; terpenoid biosynthesis. Its function is as follows. FAD-dependent monooxygenase; part of the gene cluster that mediates the biosynthesis of the diterpenoid pyrones subglutinols A and B. The first step of the pathway is the synthesis of the alpha-pyrone moiety by the polyketide synthase dpasA via condensation of one acetyl-CoA starter unit with 3 malonyl-CoA units and 2 methylations. The alpha-pyrone is then combined with geranylgeranyl pyrophosphate (GGPP) formed by the GGPP synthase dpasD through the action of the prenyltransferase dpasC to yield a linear alpha-pyrone diterpenoid. Subsequent steps in the diterpenoid pyrone biosynthetic pathway involve the decalin core formation, which is initiated by the epoxidation of the C10-C11 olefin by the FAD-dependent oxidoreductase dpasE, and is followed by a cyclization cascade catalyzed by the terpene cyclase dpasB. The FAD-linked oxidoreductase dpasF is then involved in tetrahydrofuran (THF) ring formation at the C5 unit to complete the formation of subglutinols A and B. DpasF possesses also an additional catalytic ability of multi-step oxidations to generate a new DDP analog with an enone system at the C5 named FDDP A. This is FAD-dependent monooxygenase dpasE from Apiospora sacchari (Arthrinium sacchari).